A 324-amino-acid chain; its full sequence is Glyoxylate/hydroxypyruvate reductase B (324 aa).

Active-site residues include Arg237 and Glu266. The active-site Proton donor is the His285.

The protein belongs to the D-isomer specific 2-hydroxyacid dehydrogenase family. GhrB subfamily. As to quaternary structure, homodimer.

The protein resides in the cytoplasm. It carries out the reaction glycolate + NADP(+) = glyoxylate + NADPH + H(+). The catalysed reaction is (R)-glycerate + NAD(+) = 3-hydroxypyruvate + NADH + H(+). It catalyses the reaction (R)-glycerate + NADP(+) = 3-hydroxypyruvate + NADPH + H(+). In terms of biological role, catalyzes the NADPH-dependent reduction of glyoxylate and hydroxypyruvate into glycolate and glycerate, respectively. The protein is Glyoxylate/hydroxypyruvate reductase B of Salmonella paratyphi B (strain ATCC BAA-1250 / SPB7).